The chain runs to 137 residues: Ribosomal RNA large subunit methyltransferase H (137 aa).

Residues L56, G85, and 104-109 each bind S-adenosyl-L-methionine; that span reads LSPLTL.

This sequence belongs to the RNA methyltransferase RlmH family. In terms of assembly, homodimer.

The protein resides in the cytoplasm. It carries out the reaction pseudouridine(1915) in 23S rRNA + S-adenosyl-L-methionine = N(3)-methylpseudouridine(1915) in 23S rRNA + S-adenosyl-L-homocysteine + H(+). In terms of biological role, specifically methylates the pseudouridine at position 1915 (m3Psi1915) in 23S rRNA. This Thermus thermophilus (strain ATCC 27634 / DSM 579 / HB8) protein is Ribosomal RNA large subunit methyltransferase H.